Here is a 1322-residue protein sequence, read N- to C-terminus: BRCA2-interacting transcriptional repressor EMSY (1322 aa).

Positions 1 to 478 (MPVVWPTLLD…LPKPVTATLP (478 aa)) are interaction with BRCA2. Residues 16–100 (CKRILRKLEL…EWSIEGRRLV (85 aa)) form the ENT domain. The tract at residues 104–108 (PRLVP) is interaction with ZMYND11. The span at 148–162 (STTSTPTSTPVPSGS) shows a compositional bias: low complexity. 2 disordered regions span residues 148–178 (STTSTPTSTPVPSGSIATVKSPRPASPASNV) and 192–215 (VSCSDEDEKPRKRRRTNSSSSSPV). T207 is subject to Phosphothreonine. Phosphoserine is present on residues S209 and S213. S228 and S236 each carry an O-linked (GlcNAc) serine glycan. Position 238 is a phosphoserine (S238). T271 is a glycosylation site (O-linked (GlcNAc) threonine). The span at 417–437 (QQTQQQVAQPSPVSHQQQPQQ) shows a compositional bias: low complexity. Residues 417-444 (QQTQQQVAQPSPVSHQQQPQQSPLPPGI) form a disordered region. Residues T501 and T506 are each glycosylated (O-linked (GlcNAc) threonine). O-linked (GlcNAc) serine glycosylation is present at S557. Residues 698-707 (VAEAGNSSIQ) show a composition bias toward polar residues. The interval 698 to 736 (VAEAGNSSIQEGKEEPQNYTDSSSSSTESSQSSQDSQPV) is disordered. The span at 717–734 (TDSSSSSTESSQSSQDSQ) shows a compositional bias: low complexity. Phosphoserine occurs at positions 818 and 821. Residue T1120 is glycosylated (O-linked (GlcNAc) threonine). Phosphoserine is present on S1136. Over residues 1205 to 1223 (QKCRESCSSPSTVGSSLTT) the composition is skewed to polar residues. Disordered regions lie at residues 1205 to 1231 (QKCRESCSSPSTVGSSLTTRKIDPPAV) and 1290 to 1322 (QLDDEETAMEQDIDSSTEDGTEPSPSQSSAERS). Residues 1291–1310 (LDDEETAMEQDIDSSTEDGT) are compositionally biased toward acidic residues. The span at 1312–1322 (PSPSQSSAERS) shows a compositional bias: polar residues.

As to quaternary structure, homodimer. Interacts with the transactivation domain of BRCA2. Interacts with CBX1 (via chromoshadow domain). Interacts with ZMYND11. Does not interact with CBX3 or CBX5. Component of a nuclear receptor-mediated transcription complex composed of at least ZNF335, CCAR2 and EMSY; the complex stimulates the transcription of nuclear receptor target genes such as SOX9 and HOXA1. Within the complex interacts with CCAR2 and ZNF335. Components of this complex may associate with components of a histone methylation complex to form a complex at least composed of ZNF335, HCFC1, CCAR2, EMSY, MKI67, RBBP5, ASH2L and WDR5. Within this complex, interacts with ASH2L and RBBP5. In terms of processing, O-glycosylated during cytokinesis at sites identical or close to phosphorylation sites, this interferes with the phosphorylation status.

It localises to the nucleus. Functionally, regulator which is able to repress transcription, possibly via its interaction with a multiprotein chromatin remodeling complex that modifies the chromatin. Its interaction with BRCA2 suggests that it may play a central role in the DNA repair function of BRCA2. Mediates ligand-dependent transcriptional activation by nuclear hormone receptors. This is BRCA2-interacting transcriptional repressor EMSY from Homo sapiens (Human).